A 200-amino-acid chain; its full sequence is Small ribosomal subunit protein uS4 (200 aa).

The tract at residues 22–42 is disordered; it reads TGKELEKRPYAPGPHGPGQRK. Residues 92–155 enclose the S4 RNA-binding domain; it reads TRLDNLVYRL…QNLAVVKESV (64 aa).

This sequence belongs to the universal ribosomal protein uS4 family. In terms of assembly, part of the 30S ribosomal subunit. Contacts protein S5. The interaction surface between S4 and S5 is involved in control of translational fidelity.

One of the primary rRNA binding proteins, it binds directly to 16S rRNA where it nucleates assembly of the body of the 30S subunit. Its function is as follows. With S5 and S12 plays an important role in translational accuracy. The sequence is that of Small ribosomal subunit protein uS4 from Bacillus pumilus (strain SAFR-032).